We begin with the raw amino-acid sequence, 437 residues long: MPKYDNSNADQWGFETRSIHAGQSVDAQTSARNLPIYQSTAFVFDSAEHAKQRFALEDLGPVYSRLTNPTVEALENRIASLEGGVHAVAFSSGQAATTNAILNLAGAGDHIVTSPRLYGGTETLFLITLNRLGIDVSFVENPDDPESWQAAVQPNTKAFFGETFANPQADVLDIPAVAEVAHRNSVPLIIDNTIATAALVRPLELGADVVVASLTKFYTGNGSGLGGVLIDGGKFDWTVEKDGKPVFPYFVTPDAAYHGLKYADLGAPAFGLKVRVGLLRDTGSTLSAFNAWAAVQGIDTLSLRLERHNENAIKVAEFLNNHEKVEKVNFAGLKDSPWYATKEKLGLKYTGSVLTFEIKGGKDEAWAFIDALKLHSNLANIGDVRSLVVHPATTTHSQSDEAGLARAGVTQSTVRLSVGIETIDDIIADLEGGFAAI.

At Lys216 the chain carries N6-(pyridoxal phosphate)lysine.

Belongs to the trans-sulfuration enzymes family. Homohexamer. It depends on pyridoxal 5'-phosphate as a cofactor.

The catalysed reaction is O-acetyl-L-homoserine + hydrogen sulfide = L-homocysteine + acetate. It catalyses the reaction O-acetyl-L-homoserine + methanethiol = L-methionine + acetate + H(+). The protein operates within amino-acid biosynthesis; L-methionine biosynthesis via de novo pathway; L-homocysteine from O-acetyl-L-homoserine: step 1/1. Inhibited by methionine and cystathionine. Catalyzes the conversion of O-acetyl-L-homoserine (OAH) into homocysteine in the methionine biosynthesis pathway. Can also use dimethyldisulfide and methanethiol as reduced sulfur sources, leading to the direct formation of methionine. Has weak cystathionine gamma-synthase activity. The sequence is that of O-acetyl-L-homoserine sulfhydrylase from Corynebacterium glutamicum (strain ATCC 13032 / DSM 20300 / JCM 1318 / BCRC 11384 / CCUG 27702 / LMG 3730 / NBRC 12168 / NCIMB 10025 / NRRL B-2784 / 534).